Reading from the N-terminus, the 225-residue chain is Holliday junction branch migration complex subunit RuvA (225 aa).

The segment at 1–71 is domain I; that stretch reads MISWINGELV…EDSDLLFGFT (71 aa). Residues 72 to 150 are domain II; the sequence is SKDQKFFFIE…SKIQIEEEKG (79 aa). Positions 151–161 are flexible linker; that stretch reads QEEFEITNPEI. A domain III region spans residues 161 to 225; that stretch reads IYKLMEDLQL…LDQGNSNLAR (65 aa).

This sequence belongs to the RuvA family. As to quaternary structure, homotetramer. Forms an RuvA(8)-RuvB(12)-Holliday junction (HJ) complex. HJ DNA is sandwiched between 2 RuvA tetramers; dsDNA enters through RuvA and exits via RuvB. An RuvB hexamer assembles on each DNA strand where it exits the tetramer. Each RuvB hexamer is contacted by two RuvA subunits (via domain III) on 2 adjacent RuvB subunits; this complex drives branch migration. In the full resolvosome a probable DNA-RuvA(4)-RuvB(12)-RuvC(2) complex forms which resolves the HJ.

The protein localises to the cytoplasm. Functionally, the RuvA-RuvB-RuvC complex processes Holliday junction (HJ) DNA during genetic recombination and DNA repair, while the RuvA-RuvB complex plays an important role in the rescue of blocked DNA replication forks via replication fork reversal (RFR). RuvA specifically binds to HJ cruciform DNA, conferring on it an open structure. The RuvB hexamer acts as an ATP-dependent pump, pulling dsDNA into and through the RuvAB complex. HJ branch migration allows RuvC to scan DNA until it finds its consensus sequence, where it cleaves and resolves the cruciform DNA. This chain is Holliday junction branch migration complex subunit RuvA, found in Prochlorococcus marinus (strain MIT 9215).